An 82-amino-acid chain; its full sequence is uncharacterized protein (82 aa).

It to M.thermoautotrophicum MTH386.

This is an uncharacterized protein from Methanocaldococcus jannaschii (strain ATCC 43067 / DSM 2661 / JAL-1 / JCM 10045 / NBRC 100440) (Methanococcus jannaschii).